A 57-amino-acid polypeptide reads, in one-letter code: uncharacterized protein (57 aa).

Residues 1–22 (MNEIIITIIVLILLLFITLSRN) form the signal peptide. A coiled-coil region spans residues 26–57 (NNQSNNGKKEKLIKCKKEVQQLRQKLDQLTFQ).

This is an uncharacterized protein from Acheta domesticus (House cricket).